Consider the following 345-residue polypeptide: Ferrochelatase (345 aa).

2 residues coordinate Fe cation: His199 and Glu302.

It belongs to the ferrochelatase family.

It is found in the cytoplasm. It catalyses the reaction heme b + 2 H(+) = protoporphyrin IX + Fe(2+). It functions in the pathway porphyrin-containing compound metabolism; protoheme biosynthesis; protoheme from protoporphyrin-IX: step 1/1. In terms of biological role, catalyzes the ferrous insertion into protoporphyrin IX. This Porphyromonas gingivalis (strain ATCC 33277 / DSM 20709 / CIP 103683 / JCM 12257 / NCTC 11834 / 2561) protein is Ferrochelatase.